A 347-amino-acid chain; its full sequence is Putative adhesin P1-like protein MPN_099 (347 aa).

Residues 282-300 (FGTDHSTQPQPQSLKTTTP) show a composition bias toward polar residues. Positions 282-302 (FGTDHSTQPQPQSLKTTTPVF) are disordered.

Belongs to the adhesin P1 family.

This chain is Putative adhesin P1-like protein MPN_099, found in Mycoplasma pneumoniae (strain ATCC 29342 / M129 / Subtype 1) (Mycoplasmoides pneumoniae).